The following is a 377-amino-acid chain: Putative FBD-associated F-box protein At5g44940 (377 aa).

An F-box domain is found at 4-50 (FDYISEFPDCLLTQILLNLPTKDSVKTSVLSKRWRNLWLNVPGLRLR). Residues 297–346 (IDFHKVPQCLISTLEYVQIEELILKEKSGIKLVDYFLENSAVLKKLTLSF) enclose the FBD domain.

The protein is Putative FBD-associated F-box protein At5g44940 of Arabidopsis thaliana (Mouse-ear cress).